The sequence spans 56 residues: Small ribosomal subunit protein uS14 (56 aa).

Positions 21, 24, 39, and 42 each coordinate Zn(2+).

Belongs to the universal ribosomal protein uS14 family. Requires Zn(2+) as cofactor.

The protein is Small ribosomal subunit protein uS14 (RPS29) of Candida glabrata (strain ATCC 2001 / BCRC 20586 / JCM 3761 / NBRC 0622 / NRRL Y-65 / CBS 138) (Yeast).